We begin with the raw amino-acid sequence, 663 residues long: UvrABC system protein B (663 aa).

Positions 1–10 (MIDKRDDKPF) are enriched in basic and acidic residues. The tract at residues 1–23 (MIDKRDDKPFKLKSKYKPSGDQP) is disordered. Residues 31–418 (DNIEGGEKAQ…TNTIIEQIIR (388 aa)) enclose the Helicase ATP-binding domain. ATP is bound at residue 44 to 51 (GATGTGKT). Residues 97 to 120 (YYDYYQPEAYVPSSDTYIEKDSSV) carry the Beta-hairpin motif. The 167-residue stretch at 435-601 (QMDDLLGEIN…TIKKDIRGLI (167 aa)) folds into the Helicase C-terminal domain. The UVR domain occupies 627 to 662 (KEAINALQKQMQEAAELLDFELAAQMRDLILELKLM).

The protein belongs to the UvrB family. As to quaternary structure, forms a heterotetramer with UvrA during the search for lesions. Interacts with UvrC in an incision complex.

The protein resides in the cytoplasm. Its function is as follows. The UvrABC repair system catalyzes the recognition and processing of DNA lesions. A damage recognition complex composed of 2 UvrA and 2 UvrB subunits scans DNA for abnormalities. Upon binding of the UvrA(2)B(2) complex to a putative damaged site, the DNA wraps around one UvrB monomer. DNA wrap is dependent on ATP binding by UvrB and probably causes local melting of the DNA helix, facilitating insertion of UvrB beta-hairpin between the DNA strands. Then UvrB probes one DNA strand for the presence of a lesion. If a lesion is found the UvrA subunits dissociate and the UvrB-DNA preincision complex is formed. This complex is subsequently bound by UvrC and the second UvrB is released. If no lesion is found, the DNA wraps around the other UvrB subunit that will check the other stand for damage. In Streptococcus pyogenes serotype M1, this protein is UvrABC system protein B.